Reading from the N-terminus, the 309-residue chain is MSDFTAQTTTEPREYDAGFGDYFALLKPRVMSLVVFTALVGILVAPGGVSPMIGFTAILFIALGAGASGALNMWYDADIDAVMKRTAKRPVPAGKVPAGEALTLGLWLSAISVAMLGLATNWVAAGLLAFTIFFYAVVYSMWLKRATPWNIVIGGAAGSFPPMIGWAAVTGDVSLASVLMFGIIFMWTPPHFWALALFLKKDYNNAGVPMLTVTHGRTETRRQILIYTILLVPVALGLVLTEVAGPVYLITALVCNAIFLKGAYDIWKRDEAMAEADGYAVEKKVFKFSLLYLFLHFGALLLDAIWRLI.

9 helical membrane-spanning segments follow: residues 30–49 (VMSLVVFTALVGILVAPGGV), 53–75 (IGFTAILFIALGAGASGALNMWY), 98–118 (AGEALTLGLWLSAISVAMLGL), 123–143 (VAAGLLAFTIFFYAVVYSMWL), 151–171 (IVIGGAAGSFPPMIGWAAVTG), 178–198 (VLMFGIIFMWTPPHFWALALF), 224–244 (ILIYTILLVPVALGLVLTEVA), 247–267 (VYLITALVCNAIFLKGAYDIW), and 285–305 (VFKFSLLYLFLHFGALLLDAI).

It belongs to the UbiA prenyltransferase family. Protoheme IX farnesyltransferase subfamily. As to quaternary structure, interacts with CtaA.

It localises to the cell inner membrane. The enzyme catalyses heme b + (2E,6E)-farnesyl diphosphate + H2O = Fe(II)-heme o + diphosphate. The protein operates within porphyrin-containing compound metabolism; heme O biosynthesis; heme O from protoheme: step 1/1. Its function is as follows. Converts heme B (protoheme IX) to heme O by substitution of the vinyl group on carbon 2 of heme B porphyrin ring with a hydroxyethyl farnesyl side group. This chain is Protoheme IX farnesyltransferase, found in Jannaschia sp. (strain CCS1).